Consider the following 287-residue polypeptide: Undecaprenyl-diphosphatase (287 aa).

The next 7 membrane-spanning stretches (helical) occupy residues 50–70 (PGVS…IAYF), 97–117 (LGFA…GIKF), 131–151 (IPSI…AEQV), 160–180 (VVLG…LLPG), 206–226 (FLLG…DALA), 234–254 (LPLL…IDWL), and 264–284 (WLFV…WGVY).

Belongs to the UppP family.

It is found in the cell inner membrane. It carries out the reaction di-trans,octa-cis-undecaprenyl diphosphate + H2O = di-trans,octa-cis-undecaprenyl phosphate + phosphate + H(+). Functionally, catalyzes the dephosphorylation of undecaprenyl diphosphate (UPP). Confers resistance to bacitracin. The protein is Undecaprenyl-diphosphatase of Synechococcus sp. (strain CC9605).